A 93-amino-acid polypeptide reads, in one-letter code: Integration host factor subunit beta (93 aa).

Belongs to the bacterial histone-like protein family. As to quaternary structure, heterodimer of an alpha and a beta chain.

Functionally, this protein is one of the two subunits of integration host factor, a specific DNA-binding protein that functions in genetic recombination as well as in transcriptional and translational control. This is Integration host factor subunit beta from Idiomarina loihiensis (strain ATCC BAA-735 / DSM 15497 / L2-TR).